We begin with the raw amino-acid sequence, 943 residues long: Translation initiation factor IF-2 (943 aa).

2 disordered regions span residues 96–229 and 243–352; these read FIKR…ERRR and AAPK…QRQQ. Over residues 104 to 116 the composition is skewed to low complexity; sequence DAPSDAAESAPSA. Composition is skewed to basic and acidic residues over residues 120–163 and 171–229; these read ELVR…EERA and AEKK…ERRR. Low complexity predominate over residues 278–293; the sequence is ATGSGTGARAAAPSAP. A compositionally biased stretch (basic and acidic residues) spans 313-323; the sequence is TTKKKEIKTRG. The region spanning 443–612 is the tr-type G domain; it reads SRAPVVTVMG…LLQAEVLELK (170 aa). A G1 region spans residues 452–459; the sequence is GHVDHGKT. 452–459 contacts GTP; it reads GHVDHGKT. Residues 477 to 481 are G2; sequence GITQH. A G3 region spans residues 498 to 501; it reads DTPG. GTP contacts are provided by residues 498-502 and 552-555; these read DTPGH and TKAD. The tract at residues 552–555 is G4; sequence TKAD. The tract at residues 588 to 590 is G5; the sequence is SSK.

It belongs to the TRAFAC class translation factor GTPase superfamily. Classic translation factor GTPase family. IF-2 subfamily.

The protein localises to the cytoplasm. Its function is as follows. One of the essential components for the initiation of protein synthesis. Protects formylmethionyl-tRNA from spontaneous hydrolysis and promotes its binding to the 30S ribosomal subunits. Also involved in the hydrolysis of GTP during the formation of the 70S ribosomal complex. This Acidovorax sp. (strain JS42) protein is Translation initiation factor IF-2.